Reading from the N-terminus, the 589-residue chain is Progranulin (589 aa).

A signal peptide spans 1 to 17 (MWVLMSWLAFAAGLVAG). The N-linked (GlcNAc...) asparagine glycan is linked to asparagine 38. Disulfide bonds link cysteine 125-cysteine 138 and cysteine 132-cysteine 148. Residue asparagine 263 is glycosylated (N-linked (GlcNAc...) asparagine). Cystine bridges form between cysteine 282/cysteine 294, cysteine 288/cysteine 304, cysteine 295/cysteine 312, cysteine 305/cysteine 319, cysteine 313/cysteine 326, cysteine 320/cysteine 333, cysteine 364/cysteine 376, cysteine 370/cysteine 386, cysteine 395/cysteine 408, and cysteine 402/cysteine 414. N-linked (GlcNAc...) asparagine glycosylation is present at asparagine 373. Asparagine 526 carries N-linked (GlcNAc...) asparagine glycosylation.

The protein belongs to the granulin family. As to quaternary structure, progranulin is secreted as a homodimer. Interacts with SLPI; interaction protects progranulin from proteolysis. Interacts (via region corresponding to granulin-7 peptide) with CTSD; stabilizes CTSD and increases its proteolytic activity. Interacts (via region corresponding to granulin-7 peptide) with SORT1; this interaction mediates endocytosis and lysosome delivery of progranulin; interaction occurs at the neuronal cell surface in a stressed nervous system. Interacts with PSAP; facilitates lysosomal delivery of progranulin from the extracellular space and the biosynthetic pathway. Forms a complex with PSAP and M6PR; PSAP bridges the binding between progranulin and M6PR. Forms a complex with PSAP and SORT1; progranulin bridges the interaction between PSAP and SORT1; facilitates lysosomal targeting of PSAP via SORT1; interaction enhances PSAP uptake in primary cortical neurons. Interacts (via regions corresponding to granulin-2 and granulin-7 peptides) with GBA1; this interaction prevents aggregation of GBA1-SCARB2 complex via interaction with HSPA1A upon stress. Interacts (via region corresponding to granulin-7 peptide) with HSPA1A; mediates recruitment of HSPA1A to GBA1 and prevents GBA1 aggregation in response to stress. N-glycosylated. Post-translationally, cleaved by ELANE; proteolysis is blocked by SLPI and is concentration- and time-dependent and induces CXCL8/IL-8 production; granulin-3 and granulin-4 are resistant to ELANE. Cleaved by CTSL in lysosome thus regulating the maturation and turnover of progranulin within the lysosome. As to expression, highly expressed at the wound site and diminishes away from the wound. Not expressed in fibroblasts and endothelial cells in intact skin. In adult brain, expressed primarily in neurons and in resting and reactive microglia. Expressed in both neurons and microglia. Highly expressed in activated microglia in response to injury. Expressed in macrophage.

It is found in the secreted. The protein resides in the lysosome. Its function is as follows. Secreted protein that acts as a key regulator of lysosomal function and as a growth factor involved in inflammation, wound healing and cell proliferation. Regulates protein trafficking to lysosomes, and also the activity of lysosomal enzymes. Also facilitates the acidification of lysosomes, causing degradation of mature CTSD by CTSB. In addition, functions as a wound-related growth factor that acts directly on dermal fibroblasts and endothelial cells to promote division, migration and the formation of capillary-like tubule structures. Also promotes epithelial cell proliferation by blocking TNF-mediated neutrophil activation preventing release of oxidants and proteases. Moreover, modulates inflammation in neurons by preserving neurons survival, axonal outgrowth and neuronal integrity. Functionally, inhibits epithelial cell proliferation and induces epithelial cells to secrete IL-8. Stabilizes CTSD through interaction with CTSD leading to maintain its aspartic-type peptidase activity. In Mus musculus (Mouse), this protein is Progranulin (Grn).